The chain runs to 185 residues: Elongation factor P (185 aa).

It belongs to the elongation factor P family.

It localises to the cytoplasm. Its pathway is protein biosynthesis; polypeptide chain elongation. Involved in peptide bond synthesis. Stimulates efficient translation and peptide-bond synthesis on native or reconstituted 70S ribosomes in vitro. Probably functions indirectly by altering the affinity of the ribosome for aminoacyl-tRNA, thus increasing their reactivity as acceptors for peptidyl transferase. In Alkaliphilus metalliredigens (strain QYMF), this protein is Elongation factor P.